The primary structure comprises 305 residues: Formamidopyrimidine-DNA glycosylase (305 aa).

The active-site Schiff-base intermediate with DNA is the P2. E3 serves as the catalytic Proton donor. The active-site Proton donor; for beta-elimination activity is the K59. DNA is bound by residues H92, R111, and R154. The segment at 239-273 (QVFDRAGEPCPVCGTPIRKVAVAQRGTHFCPRCQP) adopts an FPG-type zinc-finger fold. R263 (proton donor; for delta-elimination activity) is an active-site residue. The tract at residues 282-305 (PRRARPGRRGNSVRVAAEPPGTYE) is disordered.

This sequence belongs to the FPG family. In terms of assembly, monomer. Zn(2+) serves as cofactor.

It catalyses the reaction Hydrolysis of DNA containing ring-opened 7-methylguanine residues, releasing 2,6-diamino-4-hydroxy-5-(N-methyl)formamidopyrimidine.. It carries out the reaction 2'-deoxyribonucleotide-(2'-deoxyribose 5'-phosphate)-2'-deoxyribonucleotide-DNA = a 3'-end 2'-deoxyribonucleotide-(2,3-dehydro-2,3-deoxyribose 5'-phosphate)-DNA + a 5'-end 5'-phospho-2'-deoxyribonucleoside-DNA + H(+). Involved in base excision repair of DNA damaged by oxidation or by mutagenic agents. Acts as a DNA glycosylase that recognizes and removes damaged bases. Has a preference for oxidized purines, such as 7,8-dihydro-8-oxoguanine (8-oxoG). Has AP (apurinic/apyrimidinic) lyase activity and introduces nicks in the DNA strand. Cleaves the DNA backbone by beta-delta elimination to generate a single-strand break at the site of the removed base with both 3'- and 5'-phosphates. The protein is Formamidopyrimidine-DNA glycosylase of Symbiobacterium thermophilum (strain DSM 24528 / JCM 14929 / IAM 14863 / T).